Reading from the N-terminus, the 729-residue chain is Solute carrier family 15 member 2 (729 aa).

A disordered region spans residues 1–35 (MNPFQKNESKETLFSPVSTEEMLPRPPSPPKKSPP). Over 1–57 (MNPFQKNESKETLFSPVSTEEMLPRPPSPPKKSPPKIFGSSYPVSIAFIVVNEFCER) the chain is Cytoplasmic. Phosphoserine is present on S9. The residue at position 12 (T12) is a Phosphothreonine. A Phosphoserine modification is found at S28. Residues 58–78 (FSYYGMKAVLTLYFLYFLHWN) form a helical membrane-spanning segment. Over 79 to 87 (EDTSTSVYH) the chain is Extracellular. A helical membrane pass occupies residues 88 to 108 (AFSSLCYFTPILGAAIADSWL). Residues 109–113 (GKFKT) are Cytoplasmic-facing. Residues 114-134 (IIYLSLVYVLGHVFKSLGAIP) form a helical membrane-spanning segment. Residues 135-139 (ILGGK) are Extracellular-facing. The helical transmembrane segment at 140 to 160 (MLHTILSLVGLSLIALGTGGI) threads the bilayer. At 161–183 (KPCVAAFGGDQFEEEHAEARTRY) the chain is on the cytoplasmic side. The helical transmembrane segment at 184–204 (FSVFYLAINAGSLISTFITPM) threads the bilayer. Residues 205 to 217 (LRGDVKCFGQDCY) are Extracellular-facing. Residues 218–238 (ALAFGVPGLLMVLALVVFAMG) form a helical membrane-spanning segment. Topologically, residues 239-295 (SKMYRKPPPEGNIVAQVIKCIWFALCNRFRNRSGDLPKRQHWLDWAAEKYPKHLIAD) are cytoplasmic. Residues 296–316 (VKALTRVLFLYIPLPMFWALL) traverse the membrane as a helical segment. The Extracellular segment spans residues 317 to 343 (DQQGSRWTLQANKMNGDLGFFVLQPDQ). The chain crosses the membrane as a helical span at residues 344-364 (MQVLNPFLVLIFIPLFDLVIY). The Cytoplasmic portion of the chain corresponds to 365-380 (RLISKCRINFSSLRKM). The helical transmembrane segment at 381-401 (AVGMILACLAFAVAALVETKI) threads the bilayer. Over 402 to 611 (NGMIHPQPAS…PVNKLSIAWQ (210 aa)) the chain is Extracellular. The extracellular domain (ECD) stretch occupies residues 402-611 (NGMIHPQPAS…PVNKLSIAWQ (210 aa)). Residues N435, N448, N528, and N587 are each glycosylated (N-linked (GlcNAc...) asparagine). A helical membrane pass occupies residues 612–632 (LPQYVLVTAAEVMFSVTGLEF). The Cytoplasmic portion of the chain corresponds to 633–643 (SYSQAPSSMKS). A helical transmembrane segment spans residues 644 to 664 (VLQAAWLLTVAVGNIIVLVVA). Residues 665–674 (QFSGLAQWAE) lie on the Extracellular side of the membrane. The chain crosses the membrane as a helical span at residues 675-695 (FVLFSCLLLVVCLIFSVMAYY). At 696–729 (YVPLKSEDTREATDKQIPAVQGNMINLETKNTRL) the chain is on the cytoplasmic side.

Belongs to the major facilitator superfamily. Proton-dependent oligopeptide transporter (POT/PTR) (TC 2.A.17) family. In terms of assembly, interacts (via extracellular domain region) with trypsin. In terms of tissue distribution, strongly expressed in kidney cortex and medulla. Also detected in brain, lung and spleen. Expressed in choroid plexus.

It is found in the apical cell membrane. Its subcellular location is the cytoplasmic vesicle. The protein localises to the phagosome membrane. It localises to the cell membrane. The enzyme catalyses a dipeptide(out) + 2 H(+)(out) = a dipeptide(in) + 2 H(+)(in). It catalyses the reaction glycyl-L-leucine(out) + 2 H(+)(out) = glycyl-L-leucine(in) + 2 H(+)(in). It carries out the reaction glycyl-L-lysine(out) + 2 H(+)(out) = glycyl-L-lysine(in) + 2 H(+)(in). The catalysed reaction is glycyl-L-glutamate(out) + 3 H(+)(out) = glycyl-L-glutamate(in) + 3 H(+)(in). The enzyme catalyses L-alanyl-L-alanine(out) + 2 H(+)(out) = L-alanyl-L-alanine(in) + 2 H(+)(in). It catalyses the reaction an L-amino acid tripeptide(out) + 2 H(+)(out) = an L-amino acid tripeptide(in) + 2 H(+)(in). It carries out the reaction N-acetyl-D-muramoyl-L-alanyl-D-isoglutamine(out) + 3 H(+)(out) = N-acetyl-D-muramoyl-L-alanyl-D-isoglutamine(in) + 3 H(+)(in). The catalysed reaction is carnosine(out) + 2 H(+)(out) = carnosine(in) + 2 H(+)(in). In terms of biological role, proton-coupled amino-acid transporter that transports oligopeptides of 2 to 4 amino acids with a preference for dipeptides. Transports neutral and anionic dipeptides with a proton to peptide stoichiometry of 2:1 or 3:1. In kidney, involved in the absorption of circulating di- and tripeptides from the glomerular filtrate. Can also transport beta-lactam antibiotics, such as the aminocephalosporin cefadroxil, and other antiviral and anticancer drugs. Transports the dipeptide-like aminopeptidase inhibitor bestatin. Also able to transport carnosine. Involved in innate immunity by promoting the detection of microbial pathogens by NOD-like receptors (NLRs). Mediates transport of bacterial peptidoglycans across the plasma membrane or, in macrophages, the phagosome membrane: catalyzes the transport of certain bacterial peptidoglycans, such as muramyl dipeptide (MDP), the NOD2 ligand. The sequence is that of Solute carrier family 15 member 2 from Rattus norvegicus (Rat).